The sequence spans 79 residues: Cell division protein ZapB (79 aa).

Positions 4 to 78 (EVFEKLEAKV…LRALLGKMEE (75 aa)) form a coiled coil.

Belongs to the ZapB family. Homodimer. The ends of the coiled-coil dimer bind to each other, forming polymers. Interacts with FtsZ.

Its subcellular location is the cytoplasm. Functionally, non-essential, abundant cell division factor that is required for proper Z-ring formation. It is recruited early to the divisome by direct interaction with FtsZ, stimulating Z-ring assembly and thereby promoting cell division earlier in the cell cycle. Its recruitment to the Z-ring requires functional FtsA or ZipA. The chain is Cell division protein ZapB from Pectobacterium atrosepticum (strain SCRI 1043 / ATCC BAA-672) (Erwinia carotovora subsp. atroseptica).